A 44-amino-acid polypeptide reads, in one-letter code: Peptide Hact-4 (44 aa).

3 cysteine pairs are disulfide-bonded: cysteine 8-cysteine 42, cysteine 15-cysteine 34, and cysteine 20-cysteine 43.

In terms of tissue distribution, expressed in tentacles.

Its subcellular location is the nematocyst. It localises to the secreted. In terms of biological role, peptide with unknown function. Does not exhibit antimicrobial activity against Escherichia coli and Staphylococcus aureus. Does not exhibit any effect on human ion channel TRPV1 in a Xenopus laevis oocytes assay. The protein is Peptide Hact-4 of Heliofungia actiniformis (Mushroom coral).